Consider the following 220-residue polypeptide: Peptide methionine sulfoxide reductase MsrA (220 aa).

Cys54 is a catalytic residue.

Belongs to the MsrA Met sulfoxide reductase family.

It catalyses the reaction L-methionyl-[protein] + [thioredoxin]-disulfide + H2O = L-methionyl-(S)-S-oxide-[protein] + [thioredoxin]-dithiol. The enzyme catalyses [thioredoxin]-disulfide + L-methionine + H2O = L-methionine (S)-S-oxide + [thioredoxin]-dithiol. Its function is as follows. Has an important function as a repair enzyme for proteins that have been inactivated by oxidation. Catalyzes the reversible oxidation-reduction of methionine sulfoxide in proteins to methionine. This is Peptide methionine sulfoxide reductase MsrA from Salinispora tropica (strain ATCC BAA-916 / DSM 44818 / JCM 13857 / NBRC 105044 / CNB-440).